The sequence spans 294 residues: UPF0761 membrane protein YPN_0254 (294 aa).

Transmembrane regions (helical) follow at residues 44–64 (LLSL…FPMF), 67–87 (ISIK…GDII), 108–128 (GLIV…NIIW), 136–156 (LVFS…LVGA), 185–205 (VFPL…VPTV), 212–232 (ALIG…GFAM), and 246–266 (VLAV…IVLL).

This sequence belongs to the UPF0761 family.

Its subcellular location is the cell inner membrane. This Yersinia pestis bv. Antiqua (strain Nepal516) protein is UPF0761 membrane protein YPN_0254.